The sequence spans 625 residues: Chromatin structure-remodeling complex subunit RSC4 (625 aa).

The disordered stretch occupies residues 1–35; it reads MVVKKRKLATEAGGSDERPKYLPGKHPKNQEKTPH. Bromo domains are found at residues 53-158 and 181-292; these read WHIP…VLKA and KLVD…IQKE. 2 positions are modified to phosphoserine: Ser199 and Ser545. Residues 536–552 show a composition bias toward polar residues; it reads RTSNVNSNLSQPQQQEN. Residues 536 to 555 form a disordered region; the sequence is RTSNVNSNLSQPQQQENDVI.

Component of the two forms of the RSC complex composed of at least either RSC1 or RSC2, and ARP7, ARP9, LDB7, NPL6, RSC3, RSC30, RSC4, RSC58, RSC6, RSC8, RSC9, SFH1, STH1, HTL1 and probably RTT102. The complexes interact with histone and histone variant components of centromeric chromatin.

It is found in the nucleus. Its function is as follows. Component of the chromatin structure remodeling complex (RSC), which is involved in transcription regulation and nucleosome positioning. RSC is responsible for the transfer of a histone octamer from a nucleosome core particle to naked DNA. The reaction requires ATP and involves an activated RSC-nucleosome intermediate. Remodeling reaction also involves DNA translocation, DNA twist and conformational change. As a reconfigurer of centromeric and flanking nucleosomes, RSC complex is required both for proper kinetochore function in chromosome segregation and, via a PKC1-dependent signaling pathway, for organization of the cellular cytoskeleton. The protein is Chromatin structure-remodeling complex subunit RSC4 (RSC4) of Saccharomyces cerevisiae (strain ATCC 204508 / S288c) (Baker's yeast).